The sequence spans 794 residues: Glutamine--tRNA ligase (794 aa).

Residues 192 to 217 (DNEKPKKKKEKPAKVEDKAAPVATSE) are disordered. A 'HIGH' region motif is present at residues 277-287 (PEPNGYLHIGH). Residues 278-280 (EPN) and 284-290 (HIGHAKA) contribute to the ATP site. L-glutamine-binding residues include aspartate 310 and tyrosine 450. Residues threonine 469, 498–499 (RL), and 506–508 (MSK) each bind ATP. The 'KMSKS' region motif lies at 505–509 (VMSKR).

The protein belongs to the class-I aminoacyl-tRNA synthetase family.

The enzyme catalyses tRNA(Gln) + L-glutamine + ATP = L-glutaminyl-tRNA(Gln) + AMP + diphosphate. The chain is Glutamine--tRNA ligase from Lupinus luteus (European yellow lupine).